The chain runs to 314 residues: Inactive protein FRIGIDA (314 aa).

Positions 1–18 are enriched in low complexity; sequence MSNYPPTVAAQPTTTANP. The tract at residues 1–31 is disordered; sequence MSNYPPTVAAQPTTTANPLLQRHQSEQRRRE. Residues 67–97 are a coiled coil; that stretch reads VAVETFKRQFDDLQKHIESIENAIDSKLESN.

This sequence belongs to the Frigida family.

It localises to the nucleus. This chain is Inactive protein FRIGIDA (FRI), found in Arabidopsis thaliana (Mouse-ear cress).